Consider the following 122-residue polypeptide: UPF0145 protein TV0671 (122 aa).

This sequence belongs to the UPF0145 family.

This Thermoplasma volcanium (strain ATCC 51530 / DSM 4299 / JCM 9571 / NBRC 15438 / GSS1) protein is UPF0145 protein TV0671.